Reading from the N-terminus, the 236-residue chain is Uridylate kinase (236 aa).

10-13 is a binding site for ATP; the sequence is KLSG. Gly52 contacts UMP. ATP-binding residues include Gly53 and Arg57. UMP contacts are provided by residues Asp72 and 133–140; that span reads TGNPFFTT. The ATP site is built by Thr160, Tyr166, and Asp169.

This sequence belongs to the UMP kinase family. In terms of assembly, homohexamer.

It is found in the cytoplasm. The catalysed reaction is UMP + ATP = UDP + ADP. The protein operates within pyrimidine metabolism; CTP biosynthesis via de novo pathway; UDP from UMP (UMPK route): step 1/1. With respect to regulation, inhibited by UTP. Functionally, catalyzes the reversible phosphorylation of UMP to UDP. This Polaromonas naphthalenivorans (strain CJ2) protein is Uridylate kinase.